An 890-amino-acid chain; its full sequence is Alanine--tRNA ligase (890 aa).

Positions 578, 582, 689, and 693 each coordinate Zn(2+).

This sequence belongs to the class-II aminoacyl-tRNA synthetase family. Zn(2+) is required as a cofactor.

The protein resides in the cytoplasm. The catalysed reaction is tRNA(Ala) + L-alanine + ATP = L-alanyl-tRNA(Ala) + AMP + diphosphate. In terms of biological role, catalyzes the attachment of alanine to tRNA(Ala) in a two-step reaction: alanine is first activated by ATP to form Ala-AMP and then transferred to the acceptor end of tRNA(Ala). Also edits incorrectly charged Ser-tRNA(Ala) and Gly-tRNA(Ala) via its editing domain. This is Alanine--tRNA ligase from Deinococcus radiodurans (strain ATCC 13939 / DSM 20539 / JCM 16871 / CCUG 27074 / LMG 4051 / NBRC 15346 / NCIMB 9279 / VKM B-1422 / R1).